The sequence spans 98 residues: DNA-binding protein Fis (98 aa).

Positions 74-93 (QTRAALMMGINRGTLRKKLK) form a DNA-binding region, H-T-H motif.

It belongs to the transcriptional regulatory Fis family. As to quaternary structure, homodimer.

In terms of biological role, activates ribosomal RNA transcription. Plays a direct role in upstream activation of rRNA promoters. In Enterobacter sp. (strain 638), this protein is DNA-binding protein Fis.